Reading from the N-terminus, the 224-residue chain is LexA repressor (224 aa).

Positions 29 to 49 form a DNA-binding region, H-T-H motif; sequence RAEIARALGFRSPNAAEDHLK. Residues S142 and K179 each act as for autocatalytic cleavage activity in the active site.

Belongs to the peptidase S24 family. As to quaternary structure, homodimer.

The catalysed reaction is Hydrolysis of Ala-|-Gly bond in repressor LexA.. Represses a number of genes involved in the response to DNA damage (SOS response), including recA and lexA. In the presence of single-stranded DNA, RecA interacts with LexA causing an autocatalytic cleavage which disrupts the DNA-binding part of LexA, leading to derepression of the SOS regulon and eventually DNA repair. The polypeptide is LexA repressor (Bordetella petrii (strain ATCC BAA-461 / DSM 12804 / CCUG 43448)).